The following is a 323-amino-acid chain: Large ribosomal subunit protein uL10x (323 aa).

Residues 287–323 (DAGGGSAQAGAAAKVEEKKEESDEEDYEGGFGLFDEE) form a disordered region. S308 carries the post-translational modification Phosphoserine. The span at 308 to 323 (SDEEDYEGGFGLFDEE) shows a compositional bias: acidic residues. Y313 is subject to Phosphotyrosine.

It belongs to the universal ribosomal protein uL10 family. P0 forms a pentameric complex by interaction with dimers of P1 and P2.

Functionally, ribosomal protein P0 is the functional equivalent of E.coli protein L10. The sequence is that of Large ribosomal subunit protein uL10x (RPP0C) from Arabidopsis thaliana (Mouse-ear cress).